A 329-amino-acid chain; its full sequence is Intradiol ring-cleavage dioxygenase hqdA (329 aa).

4 residues coordinate Fe cation: Tyr-167, Tyr-201, His-225, and His-227.

Belongs to the intradiol ring-cleavage dioxygenase family. As to quaternary structure, homodimer. The cofactor is Fe(3+).

The enzyme catalyses catechol + O2 = cis,cis-muconate + 2 H(+). It carries out the reaction benzene-1,2,4-triol + O2 = maleylacetate + 2 H(+). Functionally, intradiol ring-cleavage dioxygenase involved in an alternative pathway to the protocatechuic acid pathway since it is active on hydroxyquinol and catechol but not on protocatechuic acid. The chain is Intradiol ring-cleavage dioxygenase hqdA from Aspergillus niger (strain ATCC MYA-4892 / CBS 513.88 / FGSC A1513).